The chain runs to 268 residues: TAEEKEVLYTLFHLHEEVIDIKHRKKQRNKYSVRETWDKIVKDFNSHPHVSAMRNIKQIQKFWLNSRLRKQYPYRDGSSSNLSSGSAKISSVSVSVASAVPQQQQQQHHQQHDNVKEEPEYQISPDASEHNPQADTFDEIEMDANDVSEIDEDPMEQQQQQQQEAQAQAQAQAQVQSAAAEMQKMQQVNAVAVAAAAAANATMINTHQINVDQISAEKLTLNDLLHFKTARPREEIILQIKHPSEATATQIHTIPTQAQQHPMATITA.

The DNA-binding element occupies 1–72 (TAEEKEVLYT…WLNSRLRKQY (72 aa)). A compositionally biased stretch (low complexity) spans 94-108 (VSVASAVPQQQQQQH). The interval 94 to 133 (VSVASAVPQQQQQQHHQQHDNVKEEPEYQISPDASEHNPQ) is disordered. Residues 110–119 (QQHDNVKEEP) are compositionally biased toward basic and acidic residues.

Self-associates forming complexes of several hundred monomers.

It localises to the nucleus. Functionally, involved in transvection phenomena (= synapsis-dependent gene expression), where the synaptic pairing of chromosomes carrying genes with which zeste interacts influences the expression of these genes. Zeste binds to DNA and stimulates transcription from a nearby promoter. In Drosophila sechellia (Fruit fly), this protein is Regulatory protein zeste (z).